Reading from the N-terminus, the 461-residue chain is Gustatory and pheromone receptor 32a (461 aa).

At 1-100 the chain is on the cytoplasmic side; sequence MSPNTWVIEM…YSFFVRGVVH (100 aa). The helical transmembrane segment at 101–121 threads the bilayer; it reads ALTIFNVYSLFTPISAQLFFS. Over 122–127 the chain is Extracellular; it reads YRETDN. Residues 128 to 148 traverse the membrane as a helical segment; the sequence is VNQWIELLLCILTYTLTVFVC. The Cytoplasmic portion of the chain corresponds to 149–180; the sequence is AHNTTSMLRIMNEILQLDEEVRRQFGANLSQN. The chain crosses the membrane as a helical span at residues 181–201; the sequence is FGFLVKFLVGITACQAYIIVL. At 202 to 214 the chain is on the extracellular side; it reads KIYAVQGEITPTS. Residues 215 to 235 form a helical membrane-spanning segment; the sequence is YILLAFYGIQNGLTATYIVFA. The Cytoplasmic portion of the chain corresponds to 236 to 317; sequence SALLRIVYIR…YKGINDCCNL (82 aa). Residues 318–338 form a helical membrane-spanning segment; sequence ILVSFLGYSFYTVTTNCYNLF. At 339 to 348 the chain is on the extracellular side; sequence VQITGKGMVS. A helical membrane pass occupies residues 349-369; it reads PNILQWCFAWLCLHVSLLALL. The Cytoplasmic segment spans residues 370 to 414; it reads SRSCGLTTTEANATSQILARVYAKSKEYQNIIDKFLTKSIKQEVQ. Residues 415-435 traverse the membrane as a helical segment; that stretch reads FTAYGFFAIDNSTLFKIFSAV. At 436 to 461 the chain is on the extracellular side; sequence TTYLVILIQFKQLEDSKVEDPVPEQT.

Belongs to the insect chemoreceptor superfamily. Gustatory receptor (GR) family. Gr21a subfamily. As to expression, expressed in the adult labellar chemosensory neurons. Expressed in tarsal neurons for male-male courtship suppression. In larvae, is expressed in neurons of the terminal external chemosensory organ, and the dorsal and posterior external chemosensory organs.

It is found in the cell membrane. In terms of biological role, gustatory receptor which mediates acceptance or avoidance behavior, depending on its substrates. Required for the response to N,N-Diethyl-meta-toluamide (DEET), the most widely used insect repellent worldwide. Functions as a pheromone receptor for a male inhibitory pheromone and promotes male-male aggression and suppresses male-male courtship. Also promotes preferentially virgin females courting over mated females. The sequence is that of Gustatory and pheromone receptor 32a (Gr32a) from Drosophila melanogaster (Fruit fly).